The following is a 76-amino-acid chain: uncharacterized protein (76 aa).

This is an uncharacterized protein from Escherichia coli O157:H7.